The primary structure comprises 265 residues: Transcriptional activator TAF-1 (265 aa).

Disordered regions lie at residues 1 to 133 (AHGG…SEKA) and 167 to 218 (THLK…KQAE). Low complexity predominate over residues 35 to 46 (ASLSLDASAKSS). 2 stretches are compositionally biased toward basic and acidic residues: residues 103 to 115 (RETT…DSKS) and 191 to 209 (NERE…ESAR). Residues 194–257 (ELKREKRKQS…EKLKLENAAL (64 aa)) enclose the bZIP domain. The segment at 196–215 (KREKRKQSNRESARRSRLRK) is basic motif. Residues 222–257 (LAIRVQSLTAENMTLKSEINKLMENSEKLKLENAAL) form a leucine-zipper region.

The protein belongs to the bZIP family. Present mainly in roots. Barely detectable in stems and leaves.

It is found in the nucleus. Its function is as follows. Trans-activator of a beta-glucuronidase (GUS) reporter gene. Binds to a G-box-related element, (5'-GCAACGTGGC-3'). Also binds to the HEX-motif of wheat histone H3 promoter. This is Transcriptional activator TAF-1 (TAF1) from Nicotiana tabacum (Common tobacco).